Here is a 221-residue protein sequence, read N- to C-terminus: ATP synthase subunit delta (221 aa).

Basic and acidic residues predominate over residues 1-13 (MGPVPEEHQRESE). Positions 1-31 (MGPVPEEHQRESETVASNGANESGAAVTGIP) are disordered.

It belongs to the ATPase delta chain family. As to quaternary structure, F-type ATPases have 2 components, F(1) - the catalytic core - and F(0) - the membrane proton channel. F(1) has five subunits: alpha(3), beta(3), gamma(1), delta(1), epsilon(1). F(0) has three main subunits: a(1), b(2) and c(10-14). The alpha and beta chains form an alternating ring which encloses part of the gamma chain. F(1) is attached to F(0) by a central stalk formed by the gamma and epsilon chains, while a peripheral stalk is formed by the delta and b chains.

It is found in the cell inner membrane. Functionally, f(1)F(0) ATP synthase produces ATP from ADP in the presence of a proton or sodium gradient. F-type ATPases consist of two structural domains, F(1) containing the extramembraneous catalytic core and F(0) containing the membrane proton channel, linked together by a central stalk and a peripheral stalk. During catalysis, ATP synthesis in the catalytic domain of F(1) is coupled via a rotary mechanism of the central stalk subunits to proton translocation. This protein is part of the stalk that links CF(0) to CF(1). It either transmits conformational changes from CF(0) to CF(1) or is implicated in proton conduction. The chain is ATP synthase subunit delta from Granulibacter bethesdensis (strain ATCC BAA-1260 / CGDNIH1).